A 361-amino-acid chain; its full sequence is Hydroxycarboxylate dehydrogenase B (361 aa).

NAD(+) contacts are provided by residues histidine 48, 122-124 (GRI), 178-182 (LLDYA), histidine 234, asparagine 270, and 313-316 (GEWE).

It belongs to the LDH2/MDH2 oxidoreductase family.

The enzyme catalyses 2-hydroxyglutarate + NADP(+) = 2-oxoglutarate + NADPH + H(+). The catalysed reaction is 2-hydroxyglutarate + NAD(+) = 2-oxoglutarate + NADH + H(+). It catalyses the reaction 3-phenyllactate + NADP(+) = 3-phenylpyruvate + NADPH + H(+). It carries out the reaction 3-phenyllactate + NAD(+) = 3-phenylpyruvate + NADH + H(+). The enzyme catalyses (2R)-2-hydroxy-3-(4-hydroxyphenyl)propanoate + NAD(+) = 3-(4-hydroxyphenyl)pyruvate + NADH + H(+). The catalysed reaction is (2R)-2-hydroxy-3-(4-hydroxyphenyl)propanoate + NADP(+) = 3-(4-hydroxyphenyl)pyruvate + NADPH + H(+). It catalyses the reaction (2R)-3-(3,4-dihydroxyphenyl)lactate + NADP(+) = 3-(3,4-dihydroxyphenyl)pyruvate + NADPH + H(+). It carries out the reaction (2R)-3-(3,4-dihydroxyphenyl)lactate + NAD(+) = 3-(3,4-dihydroxyphenyl)pyruvate + NADH + H(+). Catalyzes the NAD(P)H-dependent reduction of 2-oxoglutarate, phenylpyruvate and (4-hydroxyphenyl)pyruvate, leading to the respective 2-hydroxycarboxylate in vitro. Shows a preference for NADPH over NADH as a redox partner. Do not catalyze the reverse reactions. The sequence is that of Hydroxycarboxylate dehydrogenase B from Escherichia coli (strain K12).